The primary structure comprises 403 residues: Phosphoglycerate kinase (403 aa).

Substrate is bound by residues 21–23, Arg-36, 59–62, Arg-119, and Arg-159; these read DFN and HLGR. ATP-binding positions include Lys-214, Gly-301, Glu-332, and 359–362; that span reads GGDS.

The protein belongs to the phosphoglycerate kinase family. In terms of assembly, monomer.

It localises to the cytoplasm. It catalyses the reaction (2R)-3-phosphoglycerate + ATP = (2R)-3-phospho-glyceroyl phosphate + ADP. It participates in carbohydrate degradation; glycolysis; pyruvate from D-glyceraldehyde 3-phosphate: step 2/5. The polypeptide is Phosphoglycerate kinase (Lactobacillus helveticus (strain DPC 4571)).